The following is a 138-amino-acid chain: Ribosomal RNA large subunit methyltransferase H (138 aa).

S-adenosyl-L-methionine contacts are provided by residues L57, G86, and L105–F110.

It belongs to the RNA methyltransferase RlmH family. As to quaternary structure, homodimer.

It localises to the cytoplasm. It carries out the reaction pseudouridine(1915) in 23S rRNA + S-adenosyl-L-methionine = N(3)-methylpseudouridine(1915) in 23S rRNA + S-adenosyl-L-homocysteine + H(+). In terms of biological role, specifically methylates the pseudouridine at position 1915 (m3Psi1915) in 23S rRNA. The polypeptide is Ribosomal RNA large subunit methyltransferase H (Prochlorococcus marinus (strain MIT 9312)).